A 318-amino-acid polypeptide reads, in one-letter code: Aldo-keto reductase family 1 member C21 (318 aa).

20-24 (GFGTA) is a binding site for NADP(+). A substrate-binding site is contributed by Lys31. Residue Asp50 coordinates NADP(+). Tyr55 (proton donor) is an active-site residue. His117 contributes to the substrate binding site. Residues 166–167 (SN), Gln190, 216–224 (YGVLGTQRY), and 270–280 (TSLKEERIKEN) each bind NADP(+).

Belongs to the aldo/keto reductase family. In terms of assembly, monomer.

The protein localises to the cytoplasm. It catalyses the reaction androsterone + NADP(+) = 5alpha-androstan-3,17-dione + NADPH + H(+). The enzyme catalyses androsterone + NAD(+) = 5alpha-androstan-3,17-dione + NADH + H(+). In terms of biological role, NADP-dependent 17-alpha-hydroxysteroid dehydrogenase that converts 5-alpha-androstane-3,17-dione into androsterone. Has lower 3-alpha-hydroxysteroid dehydrogenase activity. Has broad substrate specificity and acts on various 17-alpha-hydroxysteroids, 17-ketosteroids, 3-alpha hydroxysteroids and 3-ketosteroids. Reduction of keto groups is strictly stereoselective. Reduction of 17-ketosteroids yields only 17-alpha-hydroxysteroids. Likewise, reduction of 3-ketosteroids yields only 3-alpha-hydroxysteroids. This chain is Aldo-keto reductase family 1 member C21 (Akr1c21), found in Rattus norvegicus (Rat).